Reading from the N-terminus, the 632-residue chain is Bestrophin homolog 24 (632 aa).

The next 4 membrane-spanning stretches (helical) occupy residues 28 to 48 (IWKA…ILSV), 83 to 103 (GFFV…IGFI), 234 to 254 (IMYP…CLLA), and 271 to 291 (LYFP…MKVA). Disordered stretches follow at residues 491 to 516 (LSNK…EHPF) and 562 to 632 (ETEV…TKFE). The span at 563-602 (TEVKRDEKKKKEEELREEGDNGKEEKDNKEDKKEEQDRPS) shows a compositional bias: basic and acidic residues. The segment covering 623–632 (PHLRPPTKFE) has biased composition (basic residues).

This sequence belongs to the anion channel-forming bestrophin (TC 1.A.46) family. Calcium-sensitive chloride channel subfamily. In terms of assembly, forms oligomers.

The protein resides in the cell membrane. Functionally, forms chloride channels. The sequence is that of Bestrophin homolog 24 (best-24) from Caenorhabditis elegans.